A 1763-amino-acid polypeptide reads, in one-letter code: Non-reducing polyketide synthase PKS19 (1763 aa).

An N-terminal acylcarrier protein transacylase domain (SAT) region spans residues 20–261 (GDQRNLFRKL…PMKKVQGMWH (242 aa)). The Ketosynthase family 3 (KS3) domain occupies 390 to 822 (SSKIAVVGMA…GGNTSIIIEE (433 aa)). Active-site for beta-ketoacyl synthase activity residues include Cys561, His696, and His740. Residues 922-1227 (FAFTGQGTFY…QRDTDNWLTL (306 aa)) are malonyl-CoA:ACP transacylase (MAT) domain. Residues 1307–1439 (HRLISEQYTD…VFYEDPSSWL (133 aa)) form an N-terminal hotdog fold region. The 303-residue stretch at 1307–1609 (HRLISEQYTD…FLQWPRVMLN (303 aa)) folds into the PKS/mFAS DH domain. The segment at 1334–1588 (GVVDGHAMNG…FVGDVYVLQG (255 aa)) is product template (PT) domain. His1339 (proton acceptor; for dehydratase activity) is an active-site residue. A C-terminal hotdog fold region spans residues 1461 to 1609 (VTGKASKLTT…FLQWPRVMLN (149 aa)). Asp1522 functions as the Proton donor; for dehydratase activity in the catalytic mechanism. Positions 1619–1690 (AKPAAKVPGK…MEELPSPPAG (72 aa)) are disordered. Positions 1635–1647 (PHFKPHHVSRHKP) are enriched in basic residues. Residues 1689 to 1763 (AGMNDDMEKA…TIQDLKALLR (75 aa)) form the Carrier domain. O-(pantetheine 4'-phosphoryl)serine is present on Ser1726.

Functionally, non-reducing polyketide synthase that mediates the biosynthesis of alternariol (AOH), a micotoxin that seems not to be involved in virulence and oxidative stress tolerance. PKS19 alone is sufficient for AOH synthesis which is initiated by priming with acetyl-CoA, followed by sequential condensations of 6 malonyl-CoA units. This chain is Non-reducing polyketide synthase PKS19, found in Phaeosphaeria nodorum (strain SN15 / ATCC MYA-4574 / FGSC 10173) (Glume blotch fungus).